The sequence spans 96 residues: Large ribosomal subunit protein eL14 (96 aa).

This sequence belongs to the eukaryotic ribosomal protein eL14 family.

The protein is Large ribosomal subunit protein eL14 of Metallosphaera sedula (strain ATCC 51363 / DSM 5348 / JCM 9185 / NBRC 15509 / TH2).